A 308-amino-acid polypeptide reads, in one-letter code: MNKELQPKVVFLMGPTASGKTALALELAEKHNCEIISVDSALIYRGMDIGSAKPSAEELARGPHRLIDIRDPSESYSAADFRADALSEIEQIISMGKTPLLVGGTMMYFKALLEGLSPLPSADEVIRADIQAEADANGWEALHDQLREIDPVSAERIHPNDPQRLSRALEVYRISGKSLTELTMTKSAPLPYNVVQFAIAPRERKVLHELIGQRFRIMLEQGFIDEVAQLKARDDLHLDLPSMRCVGYRQCWQYLDGEFDHDTMVEKAIAATRQLAKRQLTWLRSWPELNWLESGAEGNLVTLMRHCR.

Residue 14–21 (GPTASGKT) coordinates ATP. Residue 16–21 (TASGKT) coordinates substrate. Interaction with substrate tRNA regions lie at residues 39 to 42 (DSAL), 163 to 167 (QRLSR), and 244 to 249 (RCVGYR).

The protein belongs to the IPP transferase family. In terms of assembly, monomer. The cofactor is Mg(2+).

It catalyses the reaction adenosine(37) in tRNA + dimethylallyl diphosphate = N(6)-dimethylallyladenosine(37) in tRNA + diphosphate. Functionally, catalyzes the transfer of a dimethylallyl group onto the adenine at position 37 in tRNAs that read codons beginning with uridine, leading to the formation of N6-(dimethylallyl)adenosine (i(6)A). The chain is tRNA dimethylallyltransferase from Shewanella oneidensis (strain ATCC 700550 / JCM 31522 / CIP 106686 / LMG 19005 / NCIMB 14063 / MR-1).